The chain runs to 330 residues: MPTPAPPTELLPWERAVVLLSCVLSALGSGLLVATHALWPDLRSRARRLLLFLSLADLLSAASYFYGVLQDFAGTSWDCVLQGALSTFANTSSFFWTVAIALYLYLNIVRATRGPCTDHLVWAFHLISWGVPLAITVAAVCLKKIGYDASDVSVGWCWINLEAEDRVLWMLLTGKLWEMLAYILLPLLYLLVRKHINRAHQALSEYRPIWEGRQLQRGSPTSMADKKLILIPFIFICLRVWSTVRFVLTLCGSPVVQAPVLVVLHGIGNTFQGGANCIMFVLCTRAVRTRLFSLCCCYPRPPTQNPPGASIPPKMGESQESRRTPEVPST.

The Extracellular segment spans residues 1-15 (MPTPAPPTELLPWER). The chain crosses the membrane as a helical span at residues 16-36 (AVVLLSCVLSALGSGLLVATH). Residues 37-48 (ALWPDLRSRARR) lie on the Cytoplasmic side of the membrane. Residues 49 to 69 (LLLFLSLADLLSAASYFYGVL) form a helical membrane-spanning segment. Residues 70–87 (QDFAGTSWDCVLQGALST) are Extracellular-facing. A helical transmembrane segment spans residues 88–108 (FANTSSFFWTVAIALYLYLNI). Residues 109–119 (VRATRGPCTDH) are Cytoplasmic-facing. The helical transmembrane segment at 120–140 (LVWAFHLISWGVPLAITVAAV) threads the bilayer. Residues 141-166 (CLKKIGYDASDVSVGWCWINLEAEDR) lie on the Extracellular side of the membrane. The helical transmembrane segment at 167 to 187 (VLWMLLTGKLWEMLAYILLPL) threads the bilayer. Residues 188-227 (LYLLVRKHINRAHQALSEYRPIWEGRQLQRGSPTSMADKK) are Cytoplasmic-facing. The chain crosses the membrane as a helical span at residues 228 to 250 (LILIPFIFICLRVWSTVRFVLTL). The Extracellular segment spans residues 251–259 (CGSPVVQAP). A helical membrane pass occupies residues 260 to 282 (VLVVLHGIGNTFQGGANCIMFVL). Residues 283–330 (CTRAVRTRLFSLCCCYPRPPTQNPPGASIPPKMGESQESRRTPEVPST) are Cytoplasmic-facing. Residues 303-330 (TQNPPGASIPPKMGESQESRRTPEVPST) are disordered. Basic and acidic residues predominate over residues 317–330 (ESQESRRTPEVPST).

This sequence belongs to the G-protein coupled receptor 2 family.

The protein localises to the cell projection. The protein resides in the cilium membrane. In terms of biological role, orphan receptor that promotes neuronal differentiation of radial glial progenitors (RGPs). The activity of this receptor is mediated by a G(q)-protein that activates a phosphatidylinositol-calcium second messenger. This chain is G-protein coupled receptor 157 (Gpr157), found in Rattus norvegicus (Rat).